Consider the following 191-residue polypeptide: Imidazoleglycerol-phosphate dehydratase (191 aa).

Belongs to the imidazoleglycerol-phosphate dehydratase family.

The protein resides in the cytoplasm. It carries out the reaction D-erythro-1-(imidazol-4-yl)glycerol 3-phosphate = 3-(imidazol-4-yl)-2-oxopropyl phosphate + H2O. The protein operates within amino-acid biosynthesis; L-histidine biosynthesis; L-histidine from 5-phospho-alpha-D-ribose 1-diphosphate: step 6/9. The sequence is that of Imidazoleglycerol-phosphate dehydratase from Methanosarcina barkeri (strain Fusaro / DSM 804).